Consider the following 314-residue polypeptide: MNSSIVSQHFFISLKSSLDLQCWKSSSPSSISMGEFKGIHDKLQILKLPLTMSDRGLSKISCSLSLQTEKLRYDNDDNDDLELHEELIPKHIALIMDGNRRWAKAKGLEVYEGHKLIIPKLKEICDISSKLGIQVITAFAFSTENWKRSKEEVDFLMQLFEEFFNEFLRFGVRVSVIGCKSNLPMTLQKCIALTEETTKGNKGLHLVIALNYGGYYDILQATKSIVNKAMNGLLDVEDINKNLFEQELESKCPNPDLLIRTGGEQRVSNFLLWQLAYTEFYFTNTLFPDFGEKDLKKAILNFQQRHRRFGGHTY.

The transit peptide at 1–61 (MNSSIVSQHF…MSDRGLSKIS (61 aa)) directs the protein to the chloroplast. Residue aspartate 97 is part of the active site.

The protein belongs to the UPP synthase family. Requires Mg(2+) as cofactor. Expressed in stems. Expressed in petiolules. Expressed at low levels in leaf trichomes, old leaf and roots.

It is found in the plastid. It localises to the chloroplast. The catalysed reaction is 3 isopentenyl diphosphate + dimethylallyl diphosphate = nerylneryl diphosphate + 3 diphosphate. It catalyses the reaction isopentenyl diphosphate + dimethylallyl diphosphate = neryl diphosphate + diphosphate. It carries out the reaction neryl diphosphate + isopentenyl diphosphate = (2Z,6Z)-farnesyl diphosphate + diphosphate. The enzyme catalyses (2Z,6Z)-farnesyl diphosphate + isopentenyl diphosphate = nerylneryl diphosphate + diphosphate. In terms of biological role, uses dimethylallyl diphosphate and isopentenyl diphosphate to catalyze the cis-prenyl chain elongation and produce the 20 carbon product nerylneryl diphosphate. This is Nerylneryl diphosphate synthase CPT2, chloroplastic from Solanum lycopersicum (Tomato).